The following is a 913-amino-acid chain: Trafficking kinesin-binding protein 2 (913 aa).

Residues 11–21 show a composition bias toward polar residues; it reads SQTGEENLMSS. A disordered region spans residues 11-31; it reads SQTGEENLMSSNHRDSESITD. An HAP1 N-terminal domain is found at 48-353; the sequence is EEQLPQYKLR…QEEIKELRNK (306 aa). The stretch at 134–355 forms a coiled coil; it reads QALLKRNHVL…EIKELRNKAG (222 aa). Residues 359–507 form an interaction with HGS region; the sequence is HLCFSQAYGV…KQFFAEEWER (149 aa). A disordered region spans residues 442-478; it reads ESGVQQTEDKTLPNQGSSTEVPGNSHPRDPPGLPEDS. Positions 453 to 463 are enriched in polar residues; sequence LPNQGSSTEVP. Positions 502–519 form a coiled coil; the sequence is AEEWERKLQILAEQEEEV. 2 stretches are compositionally biased toward low complexity: residues 688-704 and 780-789; these read SSGF…GSAS and PSQSPCSSPV. Disordered regions lie at residues 688–707 and 769–790; these read SSGF…SNTA and ALAT…SPVP.

This sequence belongs to the milton family. In terms of assembly, interacts with RHOT1/Miro-1 and RHOT2/Miro-2. Interacts with GABA-A receptor and O-GlcNAc transferase. Interacts with HGS. O-glycosylated. In terms of tissue distribution, present in heart and brain (at protein level).

It is found in the cytoplasm. Its subcellular location is the early endosome. The protein resides in the mitochondrion. Its function is as follows. May regulate endosome-to-lysosome trafficking of membrane cargo, including EGFR. This is Trafficking kinesin-binding protein 2 (Trak2) from Rattus norvegicus (Rat).